Consider the following 309-residue polypeptide: Ribonuclease Z (309 aa).

Zn(2+) contacts are provided by His-63, His-65, Asp-67, His-68, His-145, Asp-216, and His-274. Catalysis depends on Asp-67, which acts as the Proton acceptor.

The protein belongs to the RNase Z family. As to quaternary structure, homodimer. Zn(2+) serves as cofactor.

It catalyses the reaction Endonucleolytic cleavage of RNA, removing extra 3' nucleotides from tRNA precursor, generating 3' termini of tRNAs. A 3'-hydroxy group is left at the tRNA terminus and a 5'-phosphoryl group is left at the trailer molecule.. Its function is as follows. Zinc phosphodiesterase, which displays some tRNA 3'-processing endonuclease activity. Probably involved in tRNA maturation, by removing a 3'-trailer from precursor tRNA. This chain is Ribonuclease Z, found in Streptococcus suis (strain 98HAH33).